Here is a 329-residue protein sequence, read N- to C-terminus: DNA-directed RNA polymerase subunit alpha (329 aa).

An alpha N-terminal domain (alpha-NTD) region spans residues 1–235 (MQGSVTEFLK…EQLEAFVDLR (235 aa)). Residues 249 to 329 (FDPILLRPVD…NWPPASIADE (81 aa)) form an alpha C-terminal domain (alpha-CTD) region.

This sequence belongs to the RNA polymerase alpha chain family. In terms of assembly, homodimer. The RNAP catalytic core consists of 2 alpha, 1 beta, 1 beta' and 1 omega subunit. When a sigma factor is associated with the core the holoenzyme is formed, which can initiate transcription.

The enzyme catalyses RNA(n) + a ribonucleoside 5'-triphosphate = RNA(n+1) + diphosphate. Functionally, DNA-dependent RNA polymerase catalyzes the transcription of DNA into RNA using the four ribonucleoside triphosphates as substrates. The chain is DNA-directed RNA polymerase subunit alpha from Shigella dysenteriae serotype 1 (strain Sd197).